A 90-amino-acid chain; its full sequence is Neurotoxin LmNaTx19 (90 aa).

Positions 1–19 (MNHLILIVAMCLMVIGVQC) are cleaved as a signal peptide. Residues 21-80 (KDGYLYDDVDCKFSCWDNEYCRKLCKSKKAVGGYCWRWRFSCYCTGLPDNEKTEGTYKCG) enclose the LCN-type CS-alpha/beta domain. Cystine bridges form between C31–C79, C35–C55, C41–C62, and C45–C64.

The protein belongs to the long (4 C-C) scorpion toxin superfamily. Sodium channel inhibitor family. Alpha subfamily. Expressed by the venom gland.

It localises to the secreted. Its function is as follows. Binds voltage-independently at site-3 of voltage-gated sodium channels (Nav) and inhibits the inactivation of the activated channels, thereby blocking neuronal transmission. This Lychas mucronatus (Chinese swimming scorpion) protein is Neurotoxin LmNaTx19.